Here is a 413-residue protein sequence, read N- to C-terminus: uncharacterized protein (413 aa).

It belongs to the mycobacterial PPE family.

This is an uncharacterized protein from Mycobacterium tuberculosis (strain CDC 1551 / Oshkosh).